The sequence spans 213 residues: Large ribosomal subunit protein mL67 (213 aa).

Belongs to the mitochondrion-specific ribosomal protein mL67 family.

The protein resides in the nucleus. Its subcellular location is the mitochondrion. Transcription factor involved in regulation of RNA polymerase II-dependent transcription. Also involved in regulation of mitochondrial DNA recombination, maintenance and repair, and generation of homoplasmic cells. The sequence is that of Large ribosomal subunit protein mL67 (MHR1) from Eremothecium gossypii (strain ATCC 10895 / CBS 109.51 / FGSC 9923 / NRRL Y-1056) (Yeast).